Consider the following 310-residue polypeptide: Beta-1,3-galactosyltransferase 5 (310 aa).

Residues 1-7 (MAFPKMR) lie on the Cytoplasmic side of the membrane. A helical; Signal-anchor for type II membrane protein transmembrane segment spans residues 8–28 (LMYICLLVLGALCLYFSMYSL). Topologically, residues 29 to 310 (NPFKEQSFVY…NSRGEDCPPV (282 aa)) are lumenal. Residues Asn-130, Asn-174, and Asn-231 are each glycosylated (N-linked (GlcNAc...) asparagine).

The protein belongs to the glycosyltransferase 31 family. As to expression, expressed in stomach, jejunum, colon, pancreas, small intestine, testis and gastrointestinal and pancreatic cancer cell lines. Hardly detected in lung, liver, adrenal gland and peripheral blood leukocytes.

The protein localises to the golgi apparatus membrane. The catalysed reaction is a globoside Gb4Cer (d18:1(4E)) + UDP-alpha-D-galactose = a globoside GalGb4Cer (d18:1(4E)) + UDP + H(+). It functions in the pathway protein modification; protein glycosylation. Catalyzes the transfer of Gal to GlcNAc-based acceptors with a preference for the core3 O-linked glycan GlcNAc(beta1,3)GalNAc structure. Can use glycolipid LC3Cer as an efficient acceptor. This chain is Beta-1,3-galactosyltransferase 5, found in Homo sapiens (Human).